The following is a 368-amino-acid chain: Peptide chain release factor 2 (368 aa).

N5-methylglutamine is present on glutamine 251.

It belongs to the prokaryotic/mitochondrial release factor family. In terms of processing, methylated by PrmC. Methylation increases the termination efficiency of RF2.

The protein resides in the cytoplasm. In terms of biological role, peptide chain release factor 2 directs the termination of translation in response to the peptide chain termination codons UGA and UAA. In Wolinella succinogenes (strain ATCC 29543 / DSM 1740 / CCUG 13145 / JCM 31913 / LMG 7466 / NCTC 11488 / FDC 602W) (Vibrio succinogenes), this protein is Peptide chain release factor 2.